We begin with the raw amino-acid sequence, 294 residues long: Transcriptional regulatory protein RXT3 (294 aa).

N-acetylserine is present on S2.

The protein belongs to the RXT3 family. Component of the RPD3C(L) complex composed of at least ASH1, CTI6, DEP1, PHO23, RPD3, RXT2, RXT3, SAP30, SDS3, SIN3, UME1 and UME6.

It localises to the nucleus. In terms of biological role, component of the RPD3C(L) histone deacetylase complex (HDAC) responsible for the deacetylation of lysine residues on the N-terminal part of the core histones (H2A, H2B, H3 and H4). Histone deacetylation gives a tag for epigenetic repression and plays an important role in transcriptional regulation, cell cycle progression and developmental events. In Saccharomyces cerevisiae (strain ATCC 204508 / S288c) (Baker's yeast), this protein is Transcriptional regulatory protein RXT3 (RXT3).